The chain runs to 172 residues: MSVKMKKCSREDLQTLQQLSIETFNDTFKEQNSPENMKAYLESAFNTEQLEKELSNMSSQFFFIYFDHEIAGYVKVNIDDAQSEEMGAESLEIERIYIKNSFQKHGLGKHLLNKAIEIALERNKKNIWLGVWEKNENAIAFYKKMGFVQTGAHSFYMGDEEQTDLIMAKTLI.

In terms of domain architecture, N-acetyltransferase spans 3-172 (VKMKKCSRED…TDLIMAKTLI (170 aa)). Acetyl-CoA-binding positions include 96 to 98 (IYI), 105 to 109 (HGLGK), and 135 to 137 (NEN). Tyr142 (proton donor) is an active-site residue. Lys144 serves as a coordination point for acetyl-CoA.

Belongs to the acetyltransferase family. In terms of assembly, monomer.

It catalyses the reaction an alkane-alpha,omega-diamine + acetyl-CoA = an N-acetylalkane-alpha,omega-diamine + CoA + H(+). Involved in the protection against polyamine toxicity by regulating their concentration. Could also be involved in the negative control of sporulation as well as production of degradative enzymes such as alpha-amylase, levansucrase and alkaline phosphatase. Catalyzes the transfer of an acetyl group from acetyl coenzyme A (AcCoA) to an acceptor substrate and releases both CoA and the acetylated product. It possesses N1-acetyltransferase activity toward polyamine substrates including spermidine, spermine, aminopropylcadaverine, norspermidine, homospermidine, N(8)-acetylspermidine, diaminopropane and agmatine. The polypeptide is Spermidine/spermine N(1)-acetyltransferase (Bacillus subtilis (strain 168)).